The sequence spans 304 residues: Uricase (304 aa).

Residue Ala2 is modified to N-acetylalanine. An N6-acetyllysine; alternate mark is found at Lys10 and Lys23. 2 positions are modified to N6-succinyllysine; alternate: Lys10 and Lys23. Lys23 (charge relay system) is an active-site residue. An N6-acetyllysine mark is found at Lys27 and Lys36. Ser39 and Ser63 each carry phosphoserine. Catalysis depends on Thr68, which acts as the Charge relay system. Residues Thr68 and Asp69 each contribute to the urate site. N6-acetyllysine occurs at positions 118, 122, and 164. Position 170 (Phe170) interacts with urate. Lys175 and Lys185 each carry N6-acetyllysine. Arg187 is a urate binding site. An N6-acetyllysine; alternate mark is found at Lys221 and Lys228. Lys221 and Lys228 each carry N6-succinyllysine; alternate. Residue Ser232 is modified to Phosphoserine. Residues Val235, Gln236, and Asn262 each coordinate urate. The active-site Charge relay system is His264. An N6-acetyllysine modification is found at Lys278. Tyr289 bears the Phosphotyrosine mark. The short motif at 302–304 (SRL) is the Microbody targeting signal element.

The protein belongs to the uricase family.

It localises to the peroxisome. The catalysed reaction is urate + O2 + H2O = 5-hydroxyisourate + H2O2. The protein operates within purine metabolism; urate degradation; (S)-allantoin from urate: step 1/3. Its function is as follows. Catalyzes the oxidation of uric acid to 5-hydroxyisourate, which is further processed to form (S)-allantoin. This is Uricase (UOX) from Macaca mulatta (Rhesus macaque).